The following is a 201-amino-acid chain: Glutathione peroxidase 1 (201 aa).

At serine 32 the chain carries Phosphoserine. Selenocysteine 47 is a catalytic residue. Residue selenocysteine 47 is a non-standard amino acid, selenocysteine. N6-acetyllysine; alternate occurs at positions 86, 112, and 146. 3 positions are modified to N6-succinyllysine; alternate: lysine 86, lysine 112, and lysine 146. Residues serine 195 and serine 199 each carry the phosphoserine modification.

Belongs to the glutathione peroxidase family. In terms of assembly, homotetramer. Interacts with MIEN1. Post-translationally, during periods of oxidative stress, Sec-47 may react with a superoxide radical, irreversibly lose hydroselenide and be converted to dehydroalanine.

It localises to the cytoplasm. It catalyses the reaction 2 glutathione + H2O2 = glutathione disulfide + 2 H2O. The enzyme catalyses (12S)-hydroperoxy-(5Z,8Z,10E,14Z)-eicosatetraenoate + 2 glutathione = (12S)-hydroxy-(5Z,8Z,10E,14Z)-eicosatetraenoate + glutathione disulfide + H2O. In terms of biological role, protects the hemoglobin in erythrocytes from oxidative breakdown. In platelets, plays a crucial role of glutathione peroxidase in the arachidonic acid metabolism. This is Glutathione peroxidase 1 (GPX1) from Hylobates lar (Lar gibbon).